A 665-amino-acid chain; its full sequence is MSGGGGDDVVCTGWLRKSPPEKKLRRYAWKKRWFILRSGRMSGDPDVLEYYKNEHSKKPLRIINLNLCEQVDAGLTFNKKELQDSFVFDIKTSERTFYLVAETEADMNKWVQSICQICGFNQAEESTDSLRNLSSASHGPRSSPAEFSSSQHLLRERKSSAPSHSSQPTLFTFEPPVSSHMQPTLSTSAPQEYLYLHQCISRRTENARSASFSQGTRQKSDTAVQKLAQSNGHCINGVGGQVHGFYSLPKPSRHNTEFKDSTYDLPRSLASHGHTKSSLTGSETDNEDVYTFKMPSNTLCRELGDLLVDNMDVPTTPLSAYQIPRTFTLDKNHNAMTVATPGDSAIAPPPRPPKPSQAETSQWGSIQQRPPISENSRSVAATIPRRNTLPAMDNSRLHRASSCETYEYPARGSGESASWSAEPPGKTAVGRSNSASSDDNYVPMNPGSSTLLAMERPGDNSQSVYIPMSPGPHHFDPLGYPSTALPIHRGPSRGSEIQPPPVNRNLKPDRKAKPTPLDLRNNTVIDELPFKSPVTKSWSRINHTFNSSSSQYCRPISTQSITSTDSGDSEENYVPMQNPVSASPVPSGTNSPAPKKSTGSVDYLALDFQPGSPSPHRKPSTSSVTSDEKVDYVQVDKEKTQALQNTMQEWTDVRQSSEPSKGAKL.

Phosphoserine is present on Ser-2. Positions Asp-8–Gly-119 constitute a PH domain. Positions Arg-131–Thr-184 are disordered. Ser-135, Ser-142, Ser-143, Ser-149, Ser-150, Ser-160, Ser-165, Ser-211, Ser-220, and Ser-261 each carry phosphoserine. The span at Ser-160–Leu-170 shows a compositional bias: polar residues. At Thr-262 the chain carries Phosphothreonine. Position 263 is a phosphotyrosine (Tyr-263). Thr-275 is subject to Phosphothreonine. Residues Ser-278 and Ser-282 each carry the phosphoserine modification. Thr-284 carries the phosphothreonine modification. The residue at position 290 (Tyr-290) is a Phosphotyrosine. Thr-328 is modified (phosphothreonine). The interval Val-338 to Arg-396 is disordered. The SH3-binding motif lies at Pro-348–Pro-355. Polar residues predominate over residues Gln-357–Val-379. At Ser-365 the chain carries Phosphoserine. Phosphothreonine is present on residues Thr-382 and Thr-388. Ser-402 carries the post-translational modification Phosphoserine. At Thr-405 the chain carries Phosphothreonine. Positions Tyr-408–Asn-445 are disordered. The residue at position 420 (Ser-420) is a Phosphoserine. The segment covering Gly-430 to Asp-439 has biased composition (polar residues). Phosphotyrosine is present on Tyr-441. Residue Ser-469 is modified to Phosphoserine. Positions Pro-491 to Leu-517 are disordered. The SH3-binding signature appears at Pro-499–Pro-508. Position 532 is a phosphoserine (Ser-532). Composition is skewed to polar residues over residues Ser-548–Ser-566 and Asn-578–Ser-600. 2 disordered regions span residues Ser-548 to Tyr-632 and Thr-646 to Leu-665. Ser-612 is modified (phosphoserine). Tyr-632 carries the phosphotyrosine modification. The segment covering Thr-646–Pro-659 has biased composition (polar residues).

The protein belongs to the GAB family. Part of a complex composed of EEIG1, TNFRSF11A/RANK, PLCG2, GAB2, TEC and BTK; complex formation increases in the presence of TNFSF11/RANKL. Interacts with HCK. Interacts with SHC1; may mediate interaction with receptors. Interacts with SYK. Interacts with PI-3 kinase. Interacts with GRB2 (via SH3 2 domain). Interacts (phosphorylated) with PTPN11. Interacts with TNFRSF11A (via cytoplasmic domain). Interacts (phosphorylated) with 14-3-3 family proteins SFN, YWHAB, YWHAE, YWHAG, YWHAH, YWHAQ and YWHAZ; prevents interaction with GRB2 and attenuates GAB2 signaling. Post-translationally, phosphorylated upon EGF stimulation. Phosphorylated on tyrosine residues by HCK upon IL6 signaling. Phosphorylated on tyrosine residue(s) by the thrombopoietin receptor (TPOR), stem cell factor receptor (SCFR), and T-cell and B-cell antigen receptors, gp130, IL-2R and IL-3R. Phosphorylated upon stimulation of TNFRSF11A/RANK by TNFSF11/RANKL. In terms of processing, dephosphorylated by PTPN11. Ubiquitously expressed.

Its subcellular location is the cytoplasm. The protein resides in the cell membrane. The protein localises to the membrane raft. In terms of biological role, adapter protein which acts downstream of several membrane receptors including cytokine, antigen, hormone, cell matrix and growth factor receptors to regulate multiple signaling pathways. Regulates osteoclast differentiation mediating the TNFRSF11A/RANK signaling. In allergic response, it plays a role in mast cells activation and degranulation through PI-3-kinase regulation. Also involved in the regulation of cell proliferation and hematopoiesis. The sequence is that of GRB2-associated-binding protein 2 (Gab2) from Mus musculus (Mouse).